The following is a 968-amino-acid chain: Dynein axonemal intermediate chain 3 (968 aa).

Residues 1–33 (MKDTSSKRPKSKEANKKKTKDKSNADNLPKPEE) are compositionally biased toward basic and acidic residues. Disordered regions lie at residues 1–39 (MKDTSSKRPKSKEANKKKTKDKSNADNLPKPEEAAASEP) and 136–166 (KPPAEGADEQMEDEEQQEEEEEMMTKTPEPQ). The span at 141 to 157 (GADEQMEDEEQQEEEEE) shows a compositional bias: acidic residues. WD repeat units lie at residues 407–447 (ECPD…DRLQ), 480–536 (GHKA…VMVH), and 712–753 (VYSK…RQPS). Positions 830 to 857 (LHTHTDQLRVLEERVREAKQNLLAVSDR) form a coiled coil. Residues 897–919 (KRQSDHQKKKKETEAEQQKKKTE) are compositionally biased toward basic and acidic residues. Residues 897 to 930 (KRQSDHQKKKKETEAEQQKKKTELVTPPKQEEEV) form a disordered region.

In terms of assembly, part of the multisubunit axonemal dynein complex formed at least of two heavy chains and a number of intermediate and light chains.

The protein resides in the cytoplasm. Functionally, may be involved in the regulation of cilia function. The chain is Dynein axonemal intermediate chain 3 (dnai3) from Danio rerio (Zebrafish).